Reading from the N-terminus, the 313-residue chain is D-apiose import binding protein (313 aa).

The signal sequence occupies residues 1 to 26; it reads MKLTRRLTLAAFASVLALGTAAPAFS. D-apiofuranose is bound by residues asparagine 39, 115–116, 162–164, arginine 168, asparagine 218, aspartate 243, and glutamine 263; these read DR and DTN.

Belongs to the bacterial solute-binding protein 2 family.

It is found in the periplasm. In terms of biological role, part of an ABC transporter complex involved in D-apiose import. This is D-apiose import binding protein from Rhizobium rhizogenes (strain K84 / ATCC BAA-868) (Agrobacterium radiobacter).